The sequence spans 426 residues: Enolase (426 aa).

Glutamine 163 contacts (2R)-2-phosphoglycerate. Glutamate 205 functions as the Proton donor in the catalytic mechanism. Mg(2+)-binding residues include aspartate 242, glutamate 285, and aspartate 312. The (2R)-2-phosphoglycerate site is built by lysine 337, arginine 366, serine 367, and lysine 388. Lysine 337 functions as the Proton acceptor in the catalytic mechanism.

The protein belongs to the enolase family. Mg(2+) is required as a cofactor.

The protein localises to the cytoplasm. Its subcellular location is the secreted. It localises to the cell surface. The catalysed reaction is (2R)-2-phosphoglycerate = phosphoenolpyruvate + H2O. The protein operates within carbohydrate degradation; glycolysis; pyruvate from D-glyceraldehyde 3-phosphate: step 4/5. Catalyzes the reversible conversion of 2-phosphoglycerate (2-PG) into phosphoenolpyruvate (PEP). It is essential for the degradation of carbohydrates via glycolysis. The polypeptide is Enolase (Nitrobacter winogradskyi (strain ATCC 25391 / DSM 10237 / CIP 104748 / NCIMB 11846 / Nb-255)).